The primary structure comprises 593 residues: Proteasome-associated ATPase (593 aa).

Residues 23-95 (LLSQISYLEE…LKEEVDRLGQ (73 aa)) are a coiled coil. 282-287 (GCGKTL) is a binding site for ATP. The tract at residues 592-593 (YL) is docks into pockets in the proteasome alpha-ring.

Belongs to the AAA ATPase family. Homohexamer. Assembles into a hexameric ring structure that caps the 20S proteasome core. Strongly interacts with the prokaryotic ubiquitin-like protein Pup through a hydrophobic interface; the interacting region of ARC lies in its N-terminal coiled-coil domain. There is one Pup binding site per ARC hexamer ring. Upon ATP-binding, the C-terminus of ARC interacts with the alpha-rings of the proteasome core, possibly by binding to the intersubunit pockets.

The protein operates within protein degradation; proteasomal Pup-dependent pathway. Functionally, ATPase which is responsible for recognizing, binding, unfolding and translocation of pupylated proteins into the bacterial 20S proteasome core particle. May be essential for opening the gate of the 20S proteasome via an interaction with its C-terminus, thereby allowing substrate entry and access to the site of proteolysis. Thus, the C-termini of the proteasomal ATPase may function like a 'key in a lock' to induce gate opening and therefore regulate proteolysis. This chain is Proteasome-associated ATPase, found in Geodermatophilus obscurus (strain ATCC 25078 / DSM 43160 / JCM 3152 / CCUG 61914 / KCC A-0152 / KCTC 9177 / NBRC 13315 / NRRL B-3577 / G-20).